Reading from the N-terminus, the 158-residue chain is PTS system fructose-specific EIIB component (158 aa).

One can recognise a PTS EIIB type-2 domain in the interval 1–98 (MKLVAVTSCP…AEAVVQKAVE (98 aa)). Residue Cys9 is the Phosphocysteine intermediate of the active site. Cys9 is subject to Phosphocysteine; by EIIA. Positions 104-147 (KTGSVTFGSGDDGEDADVGADDSSDDADAAESDEPVRRGGDPEK) are disordered. Positions 114–136 (DDGEDADVGADDSSDDADAAESD) are enriched in acidic residues. Positions 137–147 (EPVRRGGDPEK) are enriched in basic and acidic residues.

The protein localises to the cytoplasm. The catalysed reaction is D-fructose(out) + N(pros)-phospho-L-histidyl-[protein] = D-fructose 1-phosphate(in) + L-histidyl-[protein]. Functionally, the phosphoenolpyruvate-dependent sugar phosphotransferase system (sugar PTS), a major carbohydrate active transport system, catalyzes the phosphorylation of incoming sugar substrates concomitantly with their translocation across the cell membrane. The enzyme II PtfABC PTS system is involved in fructose transport. In Haloferax volcanii (strain ATCC 29605 / DSM 3757 / JCM 8879 / NBRC 14742 / NCIMB 2012 / VKM B-1768 / DS2) (Halobacterium volcanii), this protein is PTS system fructose-specific EIIB component.